A 214-amino-acid chain; its full sequence is MSSKLFQNKLLLAGIGGFMVGGLASWVVSSDAYTAYHRLPASAKHISEISKSPEAVQMIDNIYRERQRSMKMEEHPSLLQSKYPSNFLSFKDGLIPVFKTFYDPEHEEWISIGLMGKALTGYQKLAHGGAIATLLIESLETVRNLRSSQANSQSTQPRDPIPTENFDVRTPSYSINYKKPVPAGDWVIVRVKDDVARLYNSKSQLLAEALDLQS.

The chain crosses the membrane as a helical span at residues 10–30; the sequence is LLLAGIGGFMVGGLASWVVSS. Over residues 147 to 157 the composition is skewed to polar residues; that stretch reads SSQANSQSTQP. Residues 147 to 166 form a disordered region; it reads SSQANSQSTQPRDPIPTENF.

It is found in the membrane. This is an uncharacterized protein from Schizosaccharomyces pombe (strain 972 / ATCC 24843) (Fission yeast).